The following is a 576-amino-acid chain: RING finger and SPRY domain-containing protein 1 (576 aa).

The first 16 residues, 1 to 16 (MIVFGWAVFLASRSLG), serve as a signal peptide directing secretion. Phosphoserine is present on Ser-50. The disordered stretch occupies residues 50–99 (SGTDDSVDTQQQQAENSAVPTADTRSQPRDPVRPPRRGRGPHEPRRKKQN). The segment covering 57-68 (DTQQQQAENSAV) has biased composition (polar residues). Over residues 83–97 (PPRRGRGPHEPRRKK) the composition is skewed to basic residues. The B30.2/SPRY domain occupies 300-483 (LFLKEGRQLT…CEFNFGAKPF (184 aa)). N-linked (GlcNAc...) asparagine glycosylation occurs at Asn-314. The RING-type zinc-finger motif lies at 527–562 (CSLCCDEVADTQLKPCGHSDLCMDCALQLETCPLCR).

It is found in the secreted. The polypeptide is RING finger and SPRY domain-containing protein 1 (RSPRY1) (Pongo abelii (Sumatran orangutan)).